A 968-amino-acid polypeptide reads, in one-letter code: RNA polymerase-associated protein RapA (968 aa).

Residues 164-334 enclose the Helicase ATP-binding domain; the sequence is EVGQRHAPRV…FARLRLLDPD (171 aa). 177 to 184 is a binding site for ATP; sequence DEVGLGKT. The short motif at 280-283 is the DEAH box element; sequence DEAH. In terms of domain architecture, Helicase C-terminal spans 490–664; it reads RVEWLLNYLI…ATPSEQEGLD (175 aa).

This sequence belongs to the SNF2/RAD54 helicase family. RapA subfamily. Interacts with the RNAP. Has a higher affinity for the core RNAP than for the holoenzyme. Its ATPase activity is stimulated by binding to RNAP.

In terms of biological role, transcription regulator that activates transcription by stimulating RNA polymerase (RNAP) recycling in case of stress conditions such as supercoiled DNA or high salt concentrations. Probably acts by releasing the RNAP, when it is trapped or immobilized on tightly supercoiled DNA. Does not activate transcription on linear DNA. Probably not involved in DNA repair. The polypeptide is RNA polymerase-associated protein RapA (Yersinia enterocolitica serotype O:8 / biotype 1B (strain NCTC 13174 / 8081)).